Here is a 329-residue protein sequence, read N- to C-terminus: Alpha-tubulin N-acetyltransferase 1 (329 aa).

Residues 5 to 185 (SQVALLPKLS…NNFVVFHRYF (181 aa)) form the N-acetyltransferase domain. Residues 119–132 (FFVD…GFGK) and 155–164 (SVKFLAFLQK) contribute to the acetyl-CoA site. Disordered regions lie at residues 218–261 (PKYQ…GVGK) and 306–329 (GARR…TPEH). Positions 220–229 (YQSTTGPNNN) are enriched in polar residues. Over residues 238 to 249 (TPPPPPLPPPLV) the composition is skewed to pro residues. The segment covering 313–329 (PTRSGVQYNIISGTPEH) has biased composition (polar residues).

This sequence belongs to the acetyltransferase ATAT1 family.

The enzyme catalyses L-lysyl-[alpha-tubulin] + acetyl-CoA = N(6)-acetyl-L-lysyl-[alpha-tubulin] + CoA + H(+). In terms of biological role, specifically acetylates 'Lys-40' in alpha-tubulin on the lumenal side of microtubules. Promotes microtubule destabilization and accelerates microtubule dynamics; this activity may be independent of acetylation activity. Acetylates alpha-tubulin with a slow enzymatic rate, due to a catalytic site that is not optimized for acetyl transfer. Enters the microtubule through each end and diffuses quickly throughout the lumen of microtubules. Acetylates only long/old microtubules because of its slow acetylation rate since it does not have time to act on dynamically unstable microtubules before the enzyme is released. The protein is Alpha-tubulin N-acetyltransferase 1 of Trypanosoma cruzi (strain CL Brener).